A 465-amino-acid polypeptide reads, in one-letter code: GTPase Der (465 aa).

2 consecutive EngA-type G domains span residues 3–166 (FLVA…LNEY) and 184–358 (IHFS…ACAN). GTP is bound by residues 9 to 16 (GRANVGKS), 56 to 60 (DTGGI), 118 to 121 (NKVD), 190 to 197 (GRPNVGKS), 237 to 241 (DTAGV), and 302 to 305 (NKWD). One can recognise a KH-like domain in the interval 359-443 (KKITTADATR…PIVFEFKQSE (85 aa)). The disordered stretch occupies residues 446–465 (FADRKNKRSKDEGSKSKKVK).

The protein belongs to the TRAFAC class TrmE-Era-EngA-EngB-Septin-like GTPase superfamily. EngA (Der) GTPase family. Associates with the 50S ribosomal subunit.

Functionally, GTPase that plays an essential role in the late steps of ribosome biogenesis. The protein is GTPase Der of Francisella tularensis subsp. tularensis (strain WY96-3418).